Reading from the N-terminus, the 451-residue chain is uncharacterized protein (451 aa).

The N-terminal stretch at 1-22 (MKLKLIFSLFLVLVFCSLFVFG) is a signal peptide. 5 N-linked (GlcNAc...) asparagine glycosylation sites follow: N25, N45, N209, N326, and N402.

Its subcellular location is the secreted. This is an uncharacterized protein from Dictyostelium discoideum (Social amoeba).